Reading from the N-terminus, the 191-residue chain is Inosine triphosphate pyrophosphatase (191 aa).

ITP is bound at residue 12-17 (TGNKNK). Position 40 (Glu-40) interacts with Mg(2+). ITP is bound by residues Lys-52, 68–69 (DS), Lys-85, 144–147 (FGWE), Lys-167, and 172–173 (HR).

Belongs to the HAM1 NTPase family. As to quaternary structure, homodimer. It depends on Mg(2+) as a cofactor. Requires Mn(2+) as cofactor.

The protein resides in the cytoplasm. The protein localises to the nucleus. It catalyses the reaction ITP + H2O = IMP + diphosphate + H(+). The enzyme catalyses dITP + H2O = dIMP + diphosphate + H(+). It carries out the reaction XTP + H2O = XMP + diphosphate + H(+). In terms of biological role, pyrophosphatase that hydrolyzes non-canonical purine nucleotides such as inosine triphosphate (ITP), deoxyinosine triphosphate (dITP) or xanthosine 5'-triphosphate (XTP) to their respective monophosphate derivatives. The enzyme does not distinguish between the deoxy- and ribose forms. Probably excludes non-canonical purines from RNA and DNA precursor pools, thus preventing their incorporation into RNA and DNA and avoiding chromosomal lesions. This is Inosine triphosphate pyrophosphatase from Aspergillus oryzae (strain ATCC 42149 / RIB 40) (Yellow koji mold).